We begin with the raw amino-acid sequence, 49 residues long: DNA-directed RNA polymerase subunit Rpo12 (49 aa).

Zn(2+)-binding residues include Cys-11, Cys-27, and Cys-30.

It belongs to the archaeal Rpo12/eukaryotic RPC10 RNA polymerase subunit family. Part of the RNA polymerase complex. Requires Zn(2+) as cofactor.

Its subcellular location is the cytoplasm. The catalysed reaction is RNA(n) + a ribonucleoside 5'-triphosphate = RNA(n+1) + diphosphate. Its function is as follows. DNA-dependent RNA polymerase (RNAP) catalyzes the transcription of DNA into RNA using the four ribonucleoside triphosphates as substrates. The chain is DNA-directed RNA polymerase subunit Rpo12 from Thermococcus onnurineus (strain NA1).